Here is an 86-residue protein sequence, read N- to C-terminus: Conotoxin Lt15a (86 aa).

An N-terminal signal peptide occupies residues 1 to 23 (MEKLTILILVATVLLAIQVLVQS). Positions 24 to 49 (DGENPVKGRVKHYAAKRFSALFRGPR) are excised as a propeptide.

The protein belongs to the conotoxin O2 superfamily. Contains 4 disulfide bonds. In terms of tissue distribution, expressed by the venom duct.

The protein resides in the secreted. The sequence is that of Conotoxin Lt15a from Conus litteratus (Lettered cone).